The sequence spans 353 residues: NADH-ubiquinone oxidoreductase chain 2 (353 aa).

8 helical membrane-spanning segments follow: residues 4-24 (SVVLILLLNIIVSVVIVLSSH), 60-80 (FLVQAFSAAMILNVALVQLWL), 96-116 (IVLTLALCLKLGLFPCHFWFP), 139-159 (FIILVSVCNIISINVLTTLGC), 198-218 (IYVGCIMFVVYIVLSSTVFLI), 241-261 (GNVLVLVILSLGGLPPLTGFL), 274-294 (NLLVPCAILIVGSLLSLFFYL), and 330-350 (VLLSILSSMSILGLLLVPALW).

Belongs to the complex I subunit 2 family.

Its subcellular location is the mitochondrion inner membrane. It carries out the reaction a ubiquinone + NADH + 5 H(+)(in) = a ubiquinol + NAD(+) + 4 H(+)(out). Core subunit of the mitochondrial membrane respiratory chain NADH dehydrogenase (Complex I) that is believed to belong to the minimal assembly required for catalysis. Complex I functions in the transfer of electrons from NADH to the respiratory chain. The immediate electron acceptor for the enzyme is believed to be ubiquinone. The sequence is that of NADH-ubiquinone oxidoreductase chain 2 (ND2) from Pisaster ochraceus (Ochre sea star).